The primary structure comprises 488 residues: UDP-N-acetylmuramoyl-L-alanyl-D-glutamate--2,6-diaminopimelate ligase (488 aa).

Residues leucine 24, serine 26, and 41-43 (HQV) each bind UDP-N-acetyl-alpha-D-muramoyl-L-alanyl-D-glutamate. Residue 113–119 (GTNGKTT) coordinates ATP. UDP-N-acetyl-alpha-D-muramoyl-L-alanyl-D-glutamate contacts are provided by residues asparagine 154, 155 to 156 (TT), serine 182, glutamine 188, and arginine 190. N6-carboxylysine is present on lysine 222. Meso-2,6-diaminopimelate is bound by residues arginine 386, 410-413 (DNPR), glycine 461, and glutamate 465. The Meso-diaminopimelate recognition motif signature appears at 410-413 (DNPR).

This sequence belongs to the MurCDEF family. MurE subfamily. The cofactor is Mg(2+). Carboxylation is probably crucial for Mg(2+) binding and, consequently, for the gamma-phosphate positioning of ATP.

The protein localises to the cytoplasm. It catalyses the reaction UDP-N-acetyl-alpha-D-muramoyl-L-alanyl-D-glutamate + meso-2,6-diaminopimelate + ATP = UDP-N-acetyl-alpha-D-muramoyl-L-alanyl-gamma-D-glutamyl-meso-2,6-diaminopimelate + ADP + phosphate + H(+). It participates in cell wall biogenesis; peptidoglycan biosynthesis. Catalyzes the addition of meso-diaminopimelic acid to the nucleotide precursor UDP-N-acetylmuramoyl-L-alanyl-D-glutamate (UMAG) in the biosynthesis of bacterial cell-wall peptidoglycan. In Haemophilus influenzae (strain 86-028NP), this protein is UDP-N-acetylmuramoyl-L-alanyl-D-glutamate--2,6-diaminopimelate ligase.